Here is a 367-residue protein sequence, read N- to C-terminus: Peptide chain release factor 2 (367 aa).

At Q249 the chain carries N5-methylglutamine.

It belongs to the prokaryotic/mitochondrial release factor family. Methylated by PrmC. Methylation increases the termination efficiency of RF2.

Its subcellular location is the cytoplasm. Functionally, peptide chain release factor 2 directs the termination of translation in response to the peptide chain termination codons UGA and UAA. The sequence is that of Peptide chain release factor 2 from Thermotoga petrophila (strain ATCC BAA-488 / DSM 13995 / JCM 10881 / RKU-1).